The following is a 420-amino-acid chain: Proteinase-activated receptor 1 (420 aa).

An N-terminal signal peptide occupies residues M1–G20. Positions S21 to K42 are cleaved as a propeptide — removed for receptor activation. N38 carries an N-linked (GlcNAc...) asparagine glycan. At T43–T101 the chain is on the extracellular side. The interval E61–R80 is disordered. A glycan (N-linked (GlcNAc...) asparagine) is linked at N86. Residues K102 to L127 traverse the membrane as a helical segment. Over F128–A136 the chain is Cytoplasmic. A helical transmembrane segment spans residues V137 to F156. Residues K157–R175 are Extracellular-facing. An intrachain disulfide couples C174 to C253. Residues I176–V197 traverse the membrane as a helical segment. The Cytoplasmic segment spans residues D198–R217. A helical transmembrane segment spans residues A218–V238. The Extracellular portion of the chain corresponds to T239–I267. Residues Y268 to I287 traverse the membrane as a helical segment. Residues C288–A310 are Cytoplasmic-facing. Residues L311–L333 traverse the membrane as a helical segment. The Extracellular segment spans residues T334–Y345. The chain crosses the membrane as a helical span at residues F346 to A369. The Cytoplasmic segment spans residues S370 to A420.

This sequence belongs to the G-protein coupled receptor 1 family. Proteolytic cleavage generates a new N-terminus that functions as a tethered ligand.

The protein resides in the cell membrane. Functionally, high affinity receptor that binds the activated thrombin, leading to calcium release from intracellular stores. The thrombin-activated receptor signaling pathway is mediated through PTX-insensitive G proteins, activation of phospholipase C resulting in the production of 1D-myo-inositol 1,4,5-trisphosphate (InsP3) which binds to InsP3 receptors causing calcium release from the stores. The sequence is that of Proteinase-activated receptor 1 from Xenopus laevis (African clawed frog).